Consider the following 471-residue polypeptide: 3-isopropylmalate dehydratase large subunit (471 aa).

Positions 351, 412, and 415 each coordinate [4Fe-4S] cluster.

This sequence belongs to the aconitase/IPM isomerase family. LeuC type 1 subfamily. In terms of assembly, heterodimer of LeuC and LeuD. Requires [4Fe-4S] cluster as cofactor.

It carries out the reaction (2R,3S)-3-isopropylmalate = (2S)-2-isopropylmalate. It participates in amino-acid biosynthesis; L-leucine biosynthesis; L-leucine from 3-methyl-2-oxobutanoate: step 2/4. Functionally, catalyzes the isomerization between 2-isopropylmalate and 3-isopropylmalate, via the formation of 2-isopropylmaleate. This is 3-isopropylmalate dehydratase large subunit from Hahella chejuensis (strain KCTC 2396).